The primary structure comprises 343 residues: MTALITQEIGSFRKPDYLAKEFHKIERTPKFTELAERATRETLEVFERSGLDNIGIGGEMFRWEMYEHPAERIKGIIFYGMVRSFDNRYYRKGSAIDRLERREPFHVDEVKFVAGTTKKPLKVPITGPYTMMEWSFNDYYDSREDLAMEFARIINEELKDIASVWKQVSGGRRLEIQIDEPATTTHPDEMDIVVDSINRSVQGVDGEISMHVCYSSDYRLLYDRIPDLKIDGYNLEYSNRDTLERGLTDDKRVGFQDLKYFAQINESLQRKKFIGIGVTDVHIDYVEPVELIEDRINYALKIIGDPDLVRINPDCGLRTRSREIGEQKLRNMVMARNNILKQL.

Zn(2+) contacts are provided by H211, C213, E236, and C315.

The protein belongs to the archaeal MetE family. Zn(2+) serves as cofactor.

Its pathway is amino-acid biosynthesis; L-methionine biosynthesis via de novo pathway. Functionally, catalyzes the transfer of a methyl group to L-homocysteine resulting in methionine formation. The physiological methyl donor is unknown. This Thermoplasma acidophilum (strain ATCC 25905 / DSM 1728 / JCM 9062 / NBRC 15155 / AMRC-C165) protein is Methionine synthase.